A 282-amino-acid chain; its full sequence is Energy-coupling factor transporter ATP-binding protein EcfA2 (282 aa).

The ABC transporter domain maps to 1–234; sequence MKGSPFEKVA…ADELVALGLD (234 aa). 28–35 contacts ATP; sequence GHTGSGKS.

The protein belongs to the ABC transporter superfamily. Energy-coupling factor EcfA family. In terms of assembly, forms a stable energy-coupling factor (ECF) transporter complex composed of 2 membrane-embedded substrate-binding proteins (S component), 2 ATP-binding proteins (A component) and 2 transmembrane proteins (T component).

It is found in the cell membrane. In terms of biological role, ATP-binding (A) component of a common energy-coupling factor (ECF) ABC-transporter complex. Unlike classic ABC transporters this ECF transporter provides the energy necessary to transport a number of different substrates. This Halalkalibacterium halodurans (strain ATCC BAA-125 / DSM 18197 / FERM 7344 / JCM 9153 / C-125) (Bacillus halodurans) protein is Energy-coupling factor transporter ATP-binding protein EcfA2.